The chain runs to 550 residues: CTP synthase (550 aa).

The amidoligase domain stretch occupies residues 1-267 (MKTKFIFITG…DQKIAIMLRL (267 aa)). Ser-14 provides a ligand contact to CTP. Ser-14 lines the UTP pocket. ATP is bound by residues 15 to 20 (SLGKGL) and Asp-72. The Mg(2+) site is built by Asp-72 and Glu-141. CTP-binding positions include 148–150 (DIE), 188–193 (KTKPTQ), and Lys-224. Residues 188-193 (KTKPTQ) and Lys-224 each bind UTP. The region spanning 292–545 (TIGIVGKYVD…IKAAKKEAMG (254 aa)) is the Glutamine amidotransferase type-1 domain. Residue Gly-354 participates in L-glutamine binding. Cys-381 functions as the Nucleophile; for glutamine hydrolysis in the catalytic mechanism. L-glutamine contacts are provided by residues 382–385 (LGMQ), Glu-405, and Arg-473. Catalysis depends on residues His-518 and Glu-520.

This sequence belongs to the CTP synthase family. Homotetramer.

It catalyses the reaction UTP + L-glutamine + ATP + H2O = CTP + L-glutamate + ADP + phosphate + 2 H(+). The catalysed reaction is L-glutamine + H2O = L-glutamate + NH4(+). The enzyme catalyses UTP + NH4(+) + ATP = CTP + ADP + phosphate + 2 H(+). The protein operates within pyrimidine metabolism; CTP biosynthesis via de novo pathway; CTP from UDP: step 2/2. Its activity is regulated as follows. Allosterically activated by GTP, when glutamine is the substrate; GTP has no effect on the reaction when ammonia is the substrate. The allosteric effector GTP functions by stabilizing the protein conformation that binds the tetrahedral intermediate(s) formed during glutamine hydrolysis. Inhibited by the product CTP, via allosteric rather than competitive inhibition. Its function is as follows. Catalyzes the ATP-dependent amination of UTP to CTP with either L-glutamine or ammonia as the source of nitrogen. Regulates intracellular CTP levels through interactions with the four ribonucleotide triphosphates. In Nitratidesulfovibrio vulgaris (strain DSM 19637 / Miyazaki F) (Desulfovibrio vulgaris), this protein is CTP synthase.